A 267-amino-acid polypeptide reads, in one-letter code: tRNA pseudouridine synthase A (267 aa).

Catalysis depends on aspartate 51, which acts as the Nucleophile. A substrate-binding site is contributed by tyrosine 109.

This sequence belongs to the tRNA pseudouridine synthase TruA family. Homodimer.

It catalyses the reaction uridine(38/39/40) in tRNA = pseudouridine(38/39/40) in tRNA. Formation of pseudouridine at positions 38, 39 and 40 in the anticodon stem and loop of transfer RNAs. This Staphylococcus saprophyticus subsp. saprophyticus (strain ATCC 15305 / DSM 20229 / NCIMB 8711 / NCTC 7292 / S-41) protein is tRNA pseudouridine synthase A.